A 286-amino-acid polypeptide reads, in one-letter code: NADPH-dependent 7-cyano-7-deazaguanine reductase (286 aa).

92-94 contributes to the substrate binding site; the sequence is IES. 94 to 95 provides a ligand contact to NADPH; it reads SK. Cysteine 194 (thioimide intermediate) is an active-site residue. The active-site Proton donor is aspartate 201. 233–234 is a binding site for substrate; it reads HE. 262-263 is an NADPH binding site; it reads RG.

This sequence belongs to the GTP cyclohydrolase I family. QueF type 2 subfamily. In terms of assembly, homodimer.

It is found in the cytoplasm. It carries out the reaction 7-aminomethyl-7-carbaguanine + 2 NADP(+) = 7-cyano-7-deazaguanine + 2 NADPH + 3 H(+). It participates in tRNA modification; tRNA-queuosine biosynthesis. Its function is as follows. Catalyzes the NADPH-dependent reduction of 7-cyano-7-deazaguanine (preQ0) to 7-aminomethyl-7-deazaguanine (preQ1). This is NADPH-dependent 7-cyano-7-deazaguanine reductase from Shewanella oneidensis (strain ATCC 700550 / JCM 31522 / CIP 106686 / LMG 19005 / NCIMB 14063 / MR-1).